Here is a 267-residue protein sequence, read N- to C-terminus: N-acetylgalactosamine permease IIC component 1 (267 aa).

The Periplasmic portion of the chain corresponds to 1–10 (MHEITLLQGL). A PTS EIIC type-4 domain is found at 1-237 (MHEITLLQGL…VAVLGAGFAV (237 aa)). A helical transmembrane segment spans residues 11-31 (SLAALVFVLGIDFWLEALFLF). The Cytoplasmic segment spans residues 32-33 (RP). The helical transmembrane segment at 34–54 (IIVCTLTGAILGDIQTGLITG) threads the bilayer. Residues 55–66 (GLTELAFAGLTP) are Periplasmic-facing. Residues 67–87 (AGGVQPPNPIMAGLMTTVIAW) traverse the membrane as a helical segment. At 88-94 (STGVDAK) the chain is on the cytoplasmic side. A helical membrane pass occupies residues 95–115 (TAIGLGLPFSLLMQYVILFFY). The Periplasmic segment spans residues 116 to 141 (SAFSLFMTKADKCAKEADTAAFSRLN). The chain crosses the membrane as a helical span at residues 142–162 (WTTMLIVASAYAVIAFLCTYL). The Cytoplasmic portion of the chain corresponds to 163–177 (AQGAMQALVKAMPAW). Residues 178–198 (LTHGFEVAGGILPAVGFGLLL) form a helical membrane-spanning segment. The Periplasmic portion of the chain corresponds to 199 to 209 (RVMFKAQYIPY). Residues 210 to 230 (LIAGFLFVCYIQVSNLLPVAV) traverse the membrane as a helical segment. Over 231 to 267 (LGAGFAVYEFFNAKSRQQAQPQPVASKNEEEDYSNGI) the chain is Cytoplasmic.

The protein localises to the cell inner membrane. The phosphoenolpyruvate-dependent sugar phosphotransferase system (PTS), a major carbohydrate active -transport system, catalyzes the phosphorylation of incoming sugar substrates concomitant with their translocation across the cell membrane. This system is involved in N-acetylgalactosamine transport. The polypeptide is N-acetylgalactosamine permease IIC component 1 (agaC) (Escherichia coli (strain K12)).